The sequence spans 441 residues: BTB/POZ domain-containing protein At3g05675 (441 aa).

Positions 20-98 constitute a BTB domain; that stretch reads SDIVVRLRNE…LYVVSDDVHE (79 aa).

It participates in protein modification; protein ubiquitination. May act as a substrate-specific adapter of an E3 ubiquitin-protein ligase complex (CUL3-RBX1-BTB) which mediates the ubiquitination and subsequent proteasomal degradation of target proteins. This Arabidopsis thaliana (Mouse-ear cress) protein is BTB/POZ domain-containing protein At3g05675.